The chain runs to 275 residues: Fructose-2,6-bisphosphatase TIGAR (275 aa).

The active-site Tele-phosphohistidine intermediate is His11. Residue Glu89 is the Proton donor/acceptor of the active site.

It belongs to the phosphoglycerate mutase family.

The protein resides in the cytoplasm. It is found in the nucleus. Its subcellular location is the mitochondrion. It catalyses the reaction beta-D-fructose 2,6-bisphosphate + H2O = beta-D-fructose 6-phosphate + phosphate. Fructose-bisphosphatase hydrolyzing fructose-2,6-bisphosphate as well as fructose-1,6-bisphosphate. Acts as a negative regulator of glycolysis by lowering intracellular levels of fructose-2,6-bisphosphate in a p53/TP53-dependent manner, resulting in the pentose phosphate pathway (PPP) activation and NADPH production. Contributes to the generation of reduced glutathione to cause a decrease in intracellular reactive oxygen species (ROS) content, correlating with its ability to protect cells from oxidative or metabolic stress-induced cell death. May play a role in mitophagy inhibition. This chain is Fructose-2,6-bisphosphatase TIGAR, found in Xenopus tropicalis (Western clawed frog).